Reading from the N-terminus, the 66-residue chain is Large ribosomal subunit protein bL33c (66 aa).

Belongs to the bacterial ribosomal protein bL33 family.

It localises to the plastid. Its subcellular location is the chloroplast. In Aethionema cordifolium (Lebanon stonecress), this protein is Large ribosomal subunit protein bL33c.